Reading from the N-terminus, the 87-residue chain is Phosphoribosyl-ATP pyrophosphatase (87 aa).

This sequence belongs to the PRA-PH family.

Its subcellular location is the cytoplasm. The enzyme catalyses 1-(5-phospho-beta-D-ribosyl)-ATP + H2O = 1-(5-phospho-beta-D-ribosyl)-5'-AMP + diphosphate + H(+). It functions in the pathway amino-acid biosynthesis; L-histidine biosynthesis; L-histidine from 5-phospho-alpha-D-ribose 1-diphosphate: step 2/9. The sequence is that of Phosphoribosyl-ATP pyrophosphatase from Saccharopolyspora erythraea (strain ATCC 11635 / DSM 40517 / JCM 4748 / NBRC 13426 / NCIMB 8594 / NRRL 2338).